We begin with the raw amino-acid sequence, 376 residues long: Beta-centractin (376 aa).

Position 1 is an N-acetylmethionine (methionine 1). Position 4 is a 3'-nitrotyrosine (tyrosine 4).

Belongs to the actin family. ARP1 subfamily.

The protein localises to the cytoplasm. It is found in the cytoskeleton. Its subcellular location is the microtubule organizing center. The protein resides in the centrosome. In terms of biological role, component of a multi-subunit complex involved in microtubule based vesicle motility. It is associated with the centrosome. In Mus musculus (Mouse), this protein is Beta-centractin (Actr1b).